The sequence spans 61 residues: Photosystem II reaction center protein Z (61 aa).

2 helical membrane-spanning segments follow: residues alanine 8 to serine 28 and leucine 41 to lysine 61.

This sequence belongs to the PsbZ family. In terms of assembly, PSII is composed of 1 copy each of membrane proteins PsbA, PsbB, PsbC, PsbD, PsbE, PsbF, PsbH, PsbI, PsbJ, PsbK, PsbL, PsbM, PsbT, PsbX, PsbY, PsbZ, Psb30/Ycf12, peripheral proteins PsbO, CyanoQ (PsbQ), PsbU, PsbV and a large number of cofactors. It forms dimeric complexes.

The protein localises to the cellular thylakoid membrane. Its function is as follows. May control the interaction of photosystem II (PSII) cores with the light-harvesting antenna, regulates electron flow through the 2 photosystem reaction centers. PSII is a light-driven water plastoquinone oxidoreductase, using light energy to abstract electrons from H(2)O, generating a proton gradient subsequently used for ATP formation. The sequence is that of Photosystem II reaction center protein Z from Synechococcus sp. (strain JA-3-3Ab) (Cyanobacteria bacterium Yellowstone A-Prime).